Consider the following 320-residue polypeptide: Aspartate carbamoyltransferase catalytic subunit (320 aa).

Residues R70 and T71 each contribute to the carbamoyl phosphate site. K98 contacts L-aspartate. Carbamoyl phosphate contacts are provided by R120, H150, and Q153. L-aspartate is bound by residues R184 and R239. Residues G280 and P281 each contribute to the carbamoyl phosphate site.

It belongs to the aspartate/ornithine carbamoyltransferase superfamily. ATCase family. As to quaternary structure, heterododecamer (2C3:3R2) of six catalytic PyrB chains organized as two trimers (C3), and six regulatory PyrI chains organized as three dimers (R2).

The catalysed reaction is carbamoyl phosphate + L-aspartate = N-carbamoyl-L-aspartate + phosphate + H(+). It functions in the pathway pyrimidine metabolism; UMP biosynthesis via de novo pathway; (S)-dihydroorotate from bicarbonate: step 2/3. Functionally, catalyzes the condensation of carbamoyl phosphate and aspartate to form carbamoyl aspartate and inorganic phosphate, the committed step in the de novo pyrimidine nucleotide biosynthesis pathway. This Xylella fastidiosa (strain Temecula1 / ATCC 700964) protein is Aspartate carbamoyltransferase catalytic subunit.